The sequence spans 601 residues: Uptake hydrogenase large subunit (601 aa).

The Ni(2+) site is built by Cys74, Cys77, Cys580, and Cys583.

This sequence belongs to the [NiFe]/[NiFeSe] hydrogenase large subunit family. Heterodimer of a large and a small subunit. Ni(2+) serves as cofactor.

The protein localises to the cell membrane. The catalysed reaction is H2 + A = AH2. In terms of biological role, this enzyme recycles the H(2) produced by nitrogenase to increase the production of ATP and to protect nitrogenase against inhibition or damage by O(2) under carbon- or phosphate-limited conditions. In Azotobacter chroococcum mcd 1, this protein is Uptake hydrogenase large subunit (hupL).